The sequence spans 901 residues: Viral-enhancing factor (901 aa).

Positions 27–330 (HRRTEVGVVL…IFTWLYNPQR (304 aa)) constitute a Peptidase M60 domain. N265, N278, N339, N349, N540, N594, N595, N642, N683, and N698 each carry an N-linked (GlcNAc...) asparagine; by host glycan.

Its function is as follows. Involved in disruption of the peritrophic membrane and fusion of nucleocapsids with midgut cells. This is Viral-enhancing factor (VEF) from Pseudalatia unipuncta granulosis virus (PuGV).